We begin with the raw amino-acid sequence, 126 residues long: Large ribosomal subunit protein bL12 (126 aa).

A compositionally biased stretch (basic and acidic residues) spans 104 to 116 (AKKEDAEKAKAQL). Residues 104–126 (AKKEDAEKAKAQLEEAGATVELK) form a disordered region. A compositionally biased stretch (low complexity) spans 117 to 126 (EEAGATVELK).

This sequence belongs to the bacterial ribosomal protein bL12 family. As to quaternary structure, homodimer. Part of the ribosomal stalk of the 50S ribosomal subunit. Forms a multimeric L10(L12)X complex, where L10 forms an elongated spine to which 2 to 4 L12 dimers bind in a sequential fashion. Binds GTP-bound translation factors.

Functionally, forms part of the ribosomal stalk which helps the ribosome interact with GTP-bound translation factors. Is thus essential for accurate translation. The protein is Large ribosomal subunit protein bL12 of Bifidobacterium animalis subsp. lactis (strain AD011).